The chain runs to 251 residues: NADPH-dependent oxidoreductase (251 aa).

This sequence belongs to the flavin oxidoreductase frp family. Requires FMN as cofactor.

Reduces FMN, organic nitro compounds and disulfide DTNB. Involved in maintenance of the cellular redox state and the disulfide stress response. This chain is NADPH-dependent oxidoreductase (nfrA), found in Staphylococcus aureus (strain MRSA252).